The primary structure comprises 439 residues: UPF0597 protein Dalk_4447 (439 aa).

Belongs to the UPF0597 family.

The polypeptide is UPF0597 protein Dalk_4447 (Desulfatibacillum aliphaticivorans).